A 290-amino-acid chain; its full sequence is Fructose-1,6-bisphosphatase class 1 (290 aa).

4 residues coordinate Mg(2+): Glu-78, Asp-96, Leu-98, and Asp-99. Substrate is bound by residues 99–102 (DGSS), Tyr-201, and Lys-226. Residue Glu-232 coordinates Mg(2+).

Belongs to the FBPase class 1 family. As to quaternary structure, homotetramer. The cofactor is Mg(2+).

It is found in the cytoplasm. It carries out the reaction beta-D-fructose 1,6-bisphosphate + H2O = beta-D-fructose 6-phosphate + phosphate. It participates in carbohydrate biosynthesis; gluconeogenesis. In Helicobacter pylori (strain G27), this protein is Fructose-1,6-bisphosphatase class 1.